The following is a 101-amino-acid chain: Phosphoribosyl-AMP cyclohydrolase (101 aa).

Asp-71 is a Mg(2+) binding site. Cys-72 contributes to the Zn(2+) binding site. 2 residues coordinate Mg(2+): Asp-73 and Asp-75. Cys-88 and Cys-95 together coordinate Zn(2+).

Belongs to the PRA-CH family. In terms of assembly, homodimer. Requires Mg(2+) as cofactor. Zn(2+) is required as a cofactor.

Its subcellular location is the cytoplasm. It catalyses the reaction 1-(5-phospho-beta-D-ribosyl)-5'-AMP + H2O = 1-(5-phospho-beta-D-ribosyl)-5-[(5-phospho-beta-D-ribosylamino)methylideneamino]imidazole-4-carboxamide. It functions in the pathway amino-acid biosynthesis; L-histidine biosynthesis; L-histidine from 5-phospho-alpha-D-ribose 1-diphosphate: step 3/9. In terms of biological role, catalyzes the hydrolysis of the adenine ring of phosphoribosyl-AMP. The protein is Phosphoribosyl-AMP cyclohydrolase of Bacillus cereus (strain ATCC 14579 / DSM 31 / CCUG 7414 / JCM 2152 / NBRC 15305 / NCIMB 9373 / NCTC 2599 / NRRL B-3711).